The primary structure comprises 566 residues: Phosphatidylinositol 3,4,5-trisphosphate 3-phosphatase TPTE2 (566 aa).

4 consecutive transmembrane segments (helical) span residues 135–155 (SFAF…LLLA), 173–193 (ISLA…FVEG), 208–228 (AIIV…IKFL), and 234–254 (WIHL…HLIH). Residues 272-448 (RRYTRDGFDL…GYFAQVKHLY (177 aa)) enclose the Phosphatase tensin-type domain. Cysteine 382 acts as the Phosphocysteine intermediate in catalysis. The C2 tensin-type domain maps to 455-566 (RRILFIKRFI…ILHSFRLVFT (112 aa)).

The protein resides in the endoplasmic reticulum membrane. It is found in the golgi apparatus membrane. The enzyme catalyses a 1,2-diacyl-sn-glycero-3-phospho-(1D-myo-inositol-3,4,5-trisphosphate) + H2O = a 1,2-diacyl-sn-glycero-3-phospho-(1D-myo-inositol-4,5-bisphosphate) + phosphate. Functionally, acts as a lipid phosphatase, removing the phosphate in the D3 position of the inositol ring from phosphatidylinositol 3,4,5-trisphosphate. This is Phosphatidylinositol 3,4,5-trisphosphate 3-phosphatase TPTE2 (TPTE2) from Macaca fascicularis (Crab-eating macaque).